Reading from the N-terminus, the 546-residue chain is Chaperonin GroEL (546 aa).

ATP is bound by residues Thr-30–Pro-33, Lys-51, Asp-87–Thr-91, Gly-415, Asn-479–Ala-481, and Asp-495. The interval Pro-525–Tyr-546 is disordered. Positions Gly-536 to Tyr-546 are enriched in gly residues.

The protein belongs to the chaperonin (HSP60) family. As to quaternary structure, forms a cylinder of 14 subunits composed of two heptameric rings stacked back-to-back. Interacts with the co-chaperonin GroES.

It is found in the cytoplasm. It catalyses the reaction ATP + H2O + a folded polypeptide = ADP + phosphate + an unfolded polypeptide.. Together with its co-chaperonin GroES, plays an essential role in assisting protein folding. The GroEL-GroES system forms a nano-cage that allows encapsulation of the non-native substrate proteins and provides a physical environment optimized to promote and accelerate protein folding. This chain is Chaperonin GroEL, found in Solidesulfovibrio magneticus (strain ATCC 700980 / DSM 13731 / RS-1) (Desulfovibrio magneticus).